A 364-amino-acid chain; its full sequence is DNA replication and repair protein RecF (364 aa).

30–37 (GNNAQGKT) serves as a coordination point for ATP.

Belongs to the RecF family.

Its subcellular location is the cytoplasm. In terms of biological role, the RecF protein is involved in DNA metabolism; it is required for DNA replication and normal SOS inducibility. RecF binds preferentially to single-stranded, linear DNA. It also seems to bind ATP. The sequence is that of DNA replication and repair protein RecF from Clostridium botulinum (strain Langeland / NCTC 10281 / Type F).